We begin with the raw amino-acid sequence, 418 residues long: Gene 68 protein (418 aa).

Disordered stretches follow at residues 230 to 304 (IPAP…IHTL) and 353 to 418 (DTFE…ERRA). Residues 241 to 250 (RPSEGGDARP) show a composition bias toward basic and acidic residues. Residues 257-266 (SRARSVHGRR) show a composition bias toward basic residues. Residues 353 to 369 (DTFEDNRRDELRHDDSR) show a composition bias toward basic and acidic residues. The segment covering 395-404 (PHLRRSRGRG) has biased composition (basic residues).

Belongs to the herpesviridae US2 family.

This is Gene 68 protein from Equine herpesvirus 1 (strain Ab4p) (EHV-1).